The sequence spans 431 residues: Ribosomal RNA small subunit methyltransferase B (431 aa).

Residues 254-260 (CAAPGGK), aspartate 277, aspartate 303, and aspartate 322 each bind S-adenosyl-L-methionine. Cysteine 375 acts as the Nucleophile in catalysis.

This sequence belongs to the class I-like SAM-binding methyltransferase superfamily. RsmB/NOP family.

The protein localises to the cytoplasm. It catalyses the reaction cytidine(967) in 16S rRNA + S-adenosyl-L-methionine = 5-methylcytidine(967) in 16S rRNA + S-adenosyl-L-homocysteine + H(+). In terms of biological role, specifically methylates the cytosine at position 967 (m5C967) of 16S rRNA. The sequence is that of Ribosomal RNA small subunit methyltransferase B from Klebsiella pneumoniae subsp. pneumoniae (strain ATCC 700721 / MGH 78578).